The primary structure comprises 223 residues: UPF0441 protein YgiB (223 aa).

Positions 178–195 (TVPKTAMAPKPATTTTVT) are enriched in low complexity. The tract at residues 178 to 223 (TVPKTAMAPKPATTTTVTRGGFGESVAKQSTMQRSAAGTSTRSMGG) is disordered. The segment covering 204 to 223 (AKQSTMQRSAAGTSTRSMGG) has biased composition (polar residues).

This sequence belongs to the UPF0441 family.

The polypeptide is UPF0441 protein YgiB (Salmonella heidelberg (strain SL476)).